Here is a 196-residue protein sequence, read N- to C-terminus: Large ribosomal subunit protein bL9c (196 aa).

A chloroplast-targeting transit peptide spans 1-41; sequence MASTTSTLSLSWSNSFHSFAGAISEPQKSPENCRVMLPIVA.

In terms of assembly, component of the chloroplast large ribosomal subunit (LSU). Mature 70S chloroplast ribosomes of higher plants consist of a small (30S) and a large (50S) subunit. The 30S small subunit contains 1 molecule of ribosomal RNA (16S rRNA) and 24 different proteins. The 50S large subunit contains 3 rRNA molecules (23S, 5S and 4.5S rRNA) and 33 different proteins.

The protein resides in the plastid. It localises to the chloroplast. Component of the chloroplast ribosome (chloro-ribosome), a dedicated translation machinery responsible for the synthesis of chloroplast genome-encoded proteins, including proteins of the transcription and translation machinery and components of the photosynthetic apparatus. This chain is Large ribosomal subunit protein bL9c (RPL9), found in Spinacia oleracea (Spinach).